The primary structure comprises 397 residues: Alpha-2B adrenergic receptor (397 aa).

The chain crosses the membrane as a helical span at residues 1-25 (AIAAIIIFLILFTIFGNALVILAVL). The Cytoplasmic portion of the chain corresponds to 26–36 (TSRSLRAPQNL). The chain crosses the membrane as a helical span at residues 37-62 (FLVSLAAADILVATLIIPFSLANELL). Over 63–72 (GYWYFRRMWC) the chain is Extracellular. Residues Cys-72 and Cys-151 are joined by a disulfide bond. Residues 73 to 95 (KVYLALDVLFCTSSIVHLCAISL) form a helical membrane-spanning segment. Over 96-117 (DRYWAVSRALEYNSKRTPRRIK) the chain is Cytoplasmic. The helical transmembrane segment at 118-140 (CIILMVWLIAAVISLPSLVYKGD) threads the bilayer. The Extracellular segment spans residues 141–156 (QGPQPSGAPQCNLNQE). Residues 157 to 180 (TWYILASSIGSFFAPCLIMILVYL) form a helical membrane-spanning segment. Residues 181-361 (RIYLIAKRSH…LSREKRFTFV (181 aa)) lie on the Cytoplasmic side of the membrane. Disordered regions lie at residues 193-212 (GPRAKGAPGKSKFKQSRQVP) and 230-319 (AAGE…LQQP). Residues 280–300 (SLEEEAEEEEEGEEEREEECE) show a composition bias toward acidic residues. The segment covering 301–319 (PQALPASPASACSPPLQQP) has biased composition (low complexity). A helical transmembrane segment spans residues 362-385 (LAVVIGVFVLCWFPFFFSYSLGAI). The Extracellular portion of the chain corresponds to 386-394 (CPQQCKVPH). The helical transmembrane segment at 395–397 (DLF) threads the bilayer.

This sequence belongs to the G-protein coupled receptor 1 family. Adrenergic receptor subfamily. ADRA2B sub-subfamily. Interacts with RAB26. Interacts with PPP1R9B.

It localises to the cell membrane. Its function is as follows. Alpha-2 adrenergic receptors mediate the catecholamine-induced inhibition of adenylate cyclase through the action of G proteins. This chain is Alpha-2B adrenergic receptor (ADRA2B), found in Talpa europaea (European mole).